A 1939-amino-acid chain; its full sequence is Myosin-6 (1939 aa).

One can recognise a Myosin N-terminal SH3-like domain in the interval 32–81 (DIRTECFVPDDKEEFVKAKIVSREGGKVTAETENGKTVTVKEDQVMQQNP). Positions 85–780 (DKIEDMAMLT…LLGLLEEMRD (696 aa)) constitute a Myosin motor domain. N6,N6,N6-trimethyllysine is present on Lys-129. ATP is bound at residue 178–185 (GESGAGKT). Thr-379 bears the Phosphothreonine mark. At Ser-417 the chain carries Phosphoserine. 2 actin-binding regions span residues 657-679 (LNKL…IPNE) and 759-773 (KFGH…GLLG). Residues 783–812 (LSRIITRIQAQARGQLMRIEFKKMVERRDA) enclose the IQ domain. Residues 842 to 1939 (LKSAETEKEM…GAKQKMHDEE (1098 aa)) adopt a coiled-coil conformation. Phosphoserine occurs at positions 1090 and 1139. Tyr-1261 bears the Phosphotyrosine mark. The residue at position 1271 (Ser-1271) is a Phosphoserine. A phosphothreonine mark is found at Thr-1277 and Thr-1284. A Phosphoserine modification is found at Ser-1309. Tyr-1310 bears the Phosphotyrosine mark. Thr-1311 is modified (phosphothreonine). Ser-1512 carries the post-translational modification Phosphoserine. Residues Thr-1515 and Thr-1681 each carry the phosphothreonine modification. The disordered stretch occupies residues 1908 to 1939 (AEERADIAESQVNKLRAKSRDIGAKQKMHDEE). Basic and acidic residues predominate over residues 1925 to 1939 (KSRDIGAKQKMHDEE).

This sequence belongs to the TRAFAC class myosin-kinesin ATPase superfamily. Myosin family. As to quaternary structure, muscle myosin is a hexameric protein that consists of 2 heavy chain subunits (MHC), 2 alkali light chain subunits (MLC) and 2 regulatory light chain subunits (MLC-2).

The protein localises to the cytoplasm. Its subcellular location is the myofibril. In terms of biological role, muscle contraction. This Mesocricetus auratus (Golden hamster) protein is Myosin-6 (MYH6).